The primary structure comprises 152 residues: Deoxyuridine 5'-triphosphate nucleotidohydrolase (152 aa).

Substrate contacts are provided by residues 71–73 (RSG), N84, 88–90 (LID), and M98.

Belongs to the dUTPase family. Mg(2+) is required as a cofactor.

The catalysed reaction is dUTP + H2O = dUMP + diphosphate + H(+). It participates in pyrimidine metabolism; dUMP biosynthesis; dUMP from dCTP (dUTP route): step 2/2. Functionally, this enzyme is involved in nucleotide metabolism: it produces dUMP, the immediate precursor of thymidine nucleotides and it decreases the intracellular concentration of dUTP so that uracil cannot be incorporated into DNA. The sequence is that of Deoxyuridine 5'-triphosphate nucleotidohydrolase from Shewanella loihica (strain ATCC BAA-1088 / PV-4).